Here is a 438-residue protein sequence, read N- to C-terminus: uncharacterized protein (438 aa).

Position 59 (histidine 59) interacts with Zn(2+). The active-site Proton acceptor is the glutamate 62. Zn(2+) is bound by residues histidine 63 and glutamate 139.

Belongs to the peptidase M16 family. Zn(2+) serves as cofactor.

This is an uncharacterized protein from Mycobacterium tuberculosis (strain CDC 1551 / Oshkosh).